The sequence spans 106 residues: NADH dehydrogenase [ubiquinone] 1 alpha subcomplex subunit 8-B (106 aa).

Serine 2 carries the N-acetylserine modification. CHCH domains are found at residues 26–67 and 68–106; these read GMRC…LKDL and HQKCQKEMDDYVGCMYYYTNEFDLCRKEQEAFEKVCPLK. 3 consecutive short sequence motifs (cx9C motif) follow at residues 29 to 39, 49 to 59, and 71 to 81; these read CMPENVAFLKC, CLDKGRDVTRC, and CQKEMDDYVGC. 4 disulfides stabilise this stretch: cysteine 29–cysteine 59, cysteine 39–cysteine 49, cysteine 71–cysteine 103, and cysteine 81–cysteine 92. A Cx10C motif motif is present at residues 92-103; that stretch reads CRKEQEAFEKVC.

Belongs to the complex I NDUFA8 subunit family. In terms of assembly, complex I is composed of at least 49 different subunits.

It localises to the mitochondrion. The protein localises to the mitochondrion intermembrane space. Functionally, accessory subunit of the mitochondrial membrane respiratory chain NADH dehydrogenase (Complex I), that is believed not to be involved in catalysis. Complex I functions in the transfer of electrons from NADH to the respiratory chain. The immediate electron acceptor for the enzyme is believed to be ubiquinone. The protein is NADH dehydrogenase [ubiquinone] 1 alpha subcomplex subunit 8-B of Arabidopsis thaliana (Mouse-ear cress).